The primary structure comprises 411 residues: Lissencephaly-1 homolog (411 aa).

The 33-residue stretch at 9–41 (QREELNQAIADYLGSNGYSSALEAFRKEADISG) folds into the LisH domain. Residues 56–83 (TSVIRLQKKVMELEAKLSEAEKEVIEGA) adopt a coiled-coil conformation. WD repeat units follow at residues 106–147 (GHRA…RSLK), 149–187 (HTSS…DCVK), 191–230 (GHDH…CVKT), 233–272 (GHRE…CKAE), 275–334 (AHDH…CLFV), 337–376 (GHDN…FMKT), and 379–411 (AHQH…WECR).

The protein belongs to the WD repeat LIS1/nudF family.

The protein localises to the cytoplasm. The protein resides in the cytoskeleton. It is found in the microtubule organizing center. It localises to the centrosome. Functionally, positively regulates the activity of the minus-end directed microtubule motor protein dynein. May enhance dynein-mediated microtubule sliding by targeting dynein to the microtubule plus end. Required for several dynein- and microtubule-dependent processes. The sequence is that of Lissencephaly-1 homolog from Glossina morsitans morsitans (Savannah tsetse fly).